The primary structure comprises 331 residues: 2-isopropylmalate synthase (331 aa).

Positions 1 to 80 (RDEVVRGRDV…YTRINTREIY (80 aa)) constitute a Pyruvate carboxyltransferase domain. Residues His15, His17, and Asn51 each coordinate Mn(2+). Positions 205 to 331 (QLEHVQFFSG…PSIEEVHRGV (127 aa)) are regulatory domain.

Belongs to the alpha-IPM synthase/homocitrate synthase family. LeuA type 1 subfamily. Homotetramer. The cofactor is Mn(2+).

It localises to the cytoplasm. It catalyses the reaction 3-methyl-2-oxobutanoate + acetyl-CoA + H2O = (2S)-2-isopropylmalate + CoA + H(+). It participates in amino-acid biosynthesis; L-leucine biosynthesis; L-leucine from 3-methyl-2-oxobutanoate: step 1/4. Catalyzes the condensation of the acetyl group of acetyl-CoA with 3-methyl-2-oxobutanoate (2-oxoisovalerate) to form 3-carboxy-3-hydroxy-4-methylpentanoate (2-isopropylmalate). The protein is 2-isopropylmalate synthase of Thermus thermophilus.